A 242-amino-acid chain; its full sequence is MIELKNVNKYYGTHHVLKNINLSVKEGEKLVIIGPSGSGKSTTIRCMNGLEEVSSGEVVVNNLVLNHKNKIEICRKYCAMVFQHFNLYPHMTVLQNLTLAPMKLQKKSKKEAEETAFKYLKVVGLVDKANVYPATLSGGQQQRVAIARSLCTKKPYILFDEPTSALDPETIQEVLDVMKEISHQSNTTMVVVTHEMGFAKEVADRIIFMEDGAIVEENIPSEFFSNPKTERARLFLGKILKN.

In terms of domain architecture, ABC transporter spans 2 to 236; the sequence is IELKNVNKYY…PKTERARLFL (235 aa). An ATP-binding site is contributed by 34-41; the sequence is GPSGSGKS.

This sequence belongs to the ABC transporter superfamily.

The protein localises to the cell inner membrane. Most probably involved, with PEB1, in a binding-protein-dependent transport system for an amino acid. Probably responsible for energy coupling to the transport system. This is Probable ABC transporter ATP-binding protein PEB1C (peb1C) from Campylobacter jejuni subsp. jejuni serotype O:23/36 (strain 81-176).